The chain runs to 424 residues: CinA-like protein (424 aa).

It belongs to the CinA family.

This Shewanella halifaxensis (strain HAW-EB4) protein is CinA-like protein.